The sequence spans 392 residues: Ribosomal RNA large subunit methyltransferase G (392 aa).

Belongs to the methyltransferase superfamily. RlmG family.

Its subcellular location is the cytoplasm. It catalyses the reaction guanosine(1835) in 23S rRNA + S-adenosyl-L-methionine = N(2)-methylguanosine(1835) in 23S rRNA + S-adenosyl-L-homocysteine + H(+). Specifically methylates the guanine in position 1835 (m2G1835) of 23S rRNA. The polypeptide is Ribosomal RNA large subunit methyltransferase G (Shewanella frigidimarina (strain NCIMB 400)).